Here is a 469-residue protein sequence, read N- to C-terminus: CBL-interacting serine/threonine-protein kinase 16 (469 aa).

The 264-residue stretch at 15-278 (YNIGRLLGTG…MSEIKMIPWF (264 aa)) folds into the Protein kinase domain. Residues 21–29 (LGTGNFAKV) and lysine 44 contribute to the ATP site. Catalysis depends on aspartate 139, which acts as the Proton acceptor. Residues 157–193 (DFGLSALMMPEGLGGRRGSSDDLLHTRCGTPAYVAPE) are activation loop. Phosphoserine is present on serine 161. Phosphothreonine is present on threonine 182. Residues 290-320 (IDETIPSPPEPPTKKKKKDLNEKEDDGASPR) are disordered. The NAF domain occupies 317-342 (ASPRSFNAFQFITSMSSGFDLSNLFE). Residues 346 to 376 (KPKRMFTSKFPAKSVKERLETAAREMDMRVK) form a PPI region. A disordered region spans residues 447–469 (DDEDDVTTNDNVDTNDNKINNVS). Low complexity predominate over residues 454–469 (TNDNVDTNDNKINNVS).

The protein belongs to the protein kinase superfamily. CAMK Ser/Thr protein kinase family. SNF1 subfamily. In terms of assembly, part of a K(+)-channel calcium-sensing kinase/phosphatase complex composed by a calcium sensor CBL (CBL1, CBL2, CBL3 or CBL9), a kinase CIPK (CIPK6, CIPK16 or CIPK23), a phosphatase PP2C (AIP1) and a K(+)-channel (AKT1). Interacts with AKT1, CBL1, CBL2, CBL3 and CBL9. The cofactor is Mn(2+).

It catalyses the reaction L-seryl-[protein] + ATP = O-phospho-L-seryl-[protein] + ADP + H(+). It carries out the reaction L-threonyl-[protein] + ATP = O-phospho-L-threonyl-[protein] + ADP + H(+). CIPK serine-threonine protein kinases interact with CBL proteins. Binding of a CBL protein to the regulatory NAF domain of CIPK protein lead to the activation of the kinase in a calcium-dependent manner. Downstream of CBL1, CBL2, CBL3 and CBL9, regulates by phosphorylation the K(+) conductance and uptake of AKT1. The polypeptide is CBL-interacting serine/threonine-protein kinase 16 (CIPK16) (Arabidopsis thaliana (Mouse-ear cress)).